We begin with the raw amino-acid sequence, 438 residues long: Chromosomal replication initiator protein DnaA (438 aa).

The interval 1-71 (MTELDSLWEA…VEIVYQRTGQ (71 aa)) is domain I, interacts with DnaA modulators. The tract at residues 71-101 (QEIRPDYVLATDPTPLAQTPPRPQSTFKEET) is domain II. Residues 81–100 (TDPTPLAQTPPRPQSTFKEE) form a disordered region. A domain III, AAA+ region region spans residues 102–318 (PLNPEYTFQT…GALMRIRVFS (217 aa)). Positions 146, 148, 149, and 150 each coordinate ATP. The interval 319–438 (ELHQQPITLK…LVKLKNDLQA (120 aa)) is domain IV, binds dsDNA.

Belongs to the DnaA family. As to quaternary structure, oligomerizes as a right-handed, spiral filament on DNA at oriC.

It localises to the cytoplasm. Plays an essential role in the initiation and regulation of chromosomal replication. ATP-DnaA binds to the origin of replication (oriC) to initiate formation of the DNA replication initiation complex once per cell cycle. Binds the DnaA box (a 9 base pair repeat at the origin) and separates the double-stranded (ds)DNA. Forms a right-handed helical filament on oriC DNA; dsDNA binds to the exterior of the filament while single-stranded (ss)DNA is stabiized in the filament's interior. The ATP-DnaA-oriC complex binds and stabilizes one strand of the AT-rich DNA unwinding element (DUE), permitting loading of DNA polymerase. After initiation quickly degrades to an ADP-DnaA complex that is not apt for DNA replication. Binds acidic phospholipids. The sequence is that of Chromosomal replication initiator protein DnaA from Limosilactobacillus fermentum (strain NBRC 3956 / LMG 18251) (Lactobacillus fermentum).